A 66-amino-acid polypeptide reads, in one-letter code: Large ribosomal subunit protein bL35 (66 aa).

Residues His24–Arg43 show a composition bias toward basic residues. Residues His24–Leu44 form a disordered region.

This sequence belongs to the bacterial ribosomal protein bL35 family.

The chain is Large ribosomal subunit protein bL35 from Dictyoglomus thermophilum (strain ATCC 35947 / DSM 3960 / H-6-12).